Consider the following 317-residue polypeptide: uncharacterized protein (317 aa).

Positions 1 to 16 (MKLSFILSTLVAGALA) are cleaved as a signal peptide. The N-linked (GlcNAc...) asparagine glycan is linked to Asn42. Composition is skewed to low complexity over residues 150–238 (SSST…SSSS) and 247–259 (TAST…ASSA). The tract at residues 150 to 259 (SSSTPSSSSS…TDDSSSASSA (110 aa)) is disordered.

This is an uncharacterized protein from Schizosaccharomyces pombe (strain 972 / ATCC 24843) (Fission yeast).